The sequence spans 120 residues: Large ribosomal subunit protein uL18 (120 aa).

It belongs to the universal ribosomal protein uL18 family. In terms of assembly, part of the 50S ribosomal subunit; part of the 5S rRNA/L5/L18/L25 subcomplex. Contacts the 5S and 23S rRNAs.

In terms of biological role, this is one of the proteins that bind and probably mediate the attachment of the 5S RNA into the large ribosomal subunit, where it forms part of the central protuberance. The sequence is that of Large ribosomal subunit protein uL18 from Rippkaea orientalis (strain PCC 8801 / RF-1) (Cyanothece sp. (strain PCC 8801)).